The sequence spans 382 residues: Anhydro-N-acetylmuramic acid kinase (382 aa).

18 to 25 lines the ATP pocket; that stretch reads GTSLDGVD.

This sequence belongs to the anhydro-N-acetylmuramic acid kinase family.

The enzyme catalyses 1,6-anhydro-N-acetyl-beta-muramate + ATP + H2O = N-acetyl-D-muramate 6-phosphate + ADP + H(+). It functions in the pathway amino-sugar metabolism; 1,6-anhydro-N-acetylmuramate degradation. Its pathway is cell wall biogenesis; peptidoglycan recycling. Catalyzes the specific phosphorylation of 1,6-anhydro-N-acetylmuramic acid (anhMurNAc) with the simultaneous cleavage of the 1,6-anhydro ring, generating MurNAc-6-P. Is required for the utilization of anhMurNAc either imported from the medium or derived from its own cell wall murein, and thus plays a role in cell wall recycling. In Ralstonia nicotianae (strain ATCC BAA-1114 / GMI1000) (Ralstonia solanacearum), this protein is Anhydro-N-acetylmuramic acid kinase.